Consider the following 621-residue polypeptide: Chaperone protein HscA homolog (621 aa).

This sequence belongs to the heat shock protein 70 family.

In terms of biological role, chaperone involved in the maturation of iron-sulfur cluster-containing proteins. Has a low intrinsic ATPase activity which is markedly stimulated by HscB. The sequence is that of Chaperone protein HscA homolog from Polynucleobacter asymbioticus (strain DSM 18221 / CIP 109841 / QLW-P1DMWA-1) (Polynucleobacter necessarius subsp. asymbioticus).